The chain runs to 372 residues: Glutamate 5-kinase (372 aa).

An ATP-binding site is contributed by lysine 6. Residues serine 46, aspartate 133, and asparagine 145 each contribute to the substrate site. ATP is bound by residues 165 to 166 and 207 to 213; these read TD and TGGMYTK. One can recognise a PUA domain in the interval 272-350; the sequence is SGRLFIDEGA…HEIEKILGYK (79 aa).

It belongs to the glutamate 5-kinase family.

It localises to the cytoplasm. The enzyme catalyses L-glutamate + ATP = L-glutamyl 5-phosphate + ADP. Its pathway is amino-acid biosynthesis; L-proline biosynthesis; L-glutamate 5-semialdehyde from L-glutamate: step 1/2. Functionally, catalyzes the transfer of a phosphate group to glutamate to form L-glutamate 5-phosphate. The chain is Glutamate 5-kinase from Thermoanaerobacter pseudethanolicus (strain ATCC 33223 / 39E) (Clostridium thermohydrosulfuricum).